We begin with the raw amino-acid sequence, 220 residues long: Urease accessory protein UreF (220 aa).

This sequence belongs to the UreF family. In terms of assembly, ureD, UreF and UreG form a complex that acts as a GTP-hydrolysis-dependent molecular chaperone, activating the urease apoprotein by helping to assemble the nickel containing metallocenter of UreC. The UreE protein probably delivers the nickel.

The protein resides in the cytoplasm. Its function is as follows. Required for maturation of urease via the functional incorporation of the urease nickel metallocenter. The protein is Urease accessory protein UreF of Bordetella bronchiseptica (strain ATCC BAA-588 / NCTC 13252 / RB50) (Alcaligenes bronchisepticus).